The primary structure comprises 326 residues: Glyceraldehyde-3-phosphate dehydrogenase, cytosolic (326 aa).

NAD(+)-binding positions include 2 to 3, aspartate 24, and arginine 71; that span reads RI. Residues 142 to 144, threonine 173, 202 to 203, and arginine 225 contribute to the D-glyceraldehyde 3-phosphate site; these read SCT and TG. Cysteine 143 acts as the Nucleophile in catalysis. Asparagine 307 serves as a coordination point for NAD(+).

Belongs to the glyceraldehyde-3-phosphate dehydrogenase family.

It is found in the cytoplasm. The catalysed reaction is D-glyceraldehyde 3-phosphate + phosphate + NAD(+) = (2R)-3-phospho-glyceroyl phosphate + NADH + H(+). It participates in carbohydrate degradation; glycolysis; pyruvate from D-glyceraldehyde 3-phosphate: step 1/5. Key enzyme in glycolysis that catalyzes the first step of the pathway by converting D-glyceraldehyde 3-phosphate (G3P) into 3-phospho-D-glyceroyl phosphate. Essential for the maintenance of cellular ATP levels and carbohydrate metabolism. The chain is Glyceraldehyde-3-phosphate dehydrogenase, cytosolic (GAPC) from Nicotiana tabacum (Common tobacco).